Consider the following 237-residue polypeptide: tRNA (guanine-N(7)-)-methyltransferase (237 aa).

S-adenosyl-L-methionine is bound by residues D35, E60, N87, and D113. D113 is a catalytic residue. Substrate is bound by residues K117 and D149.

Belongs to the class I-like SAM-binding methyltransferase superfamily. TrmB family.

The enzyme catalyses guanosine(46) in tRNA + S-adenosyl-L-methionine = N(7)-methylguanosine(46) in tRNA + S-adenosyl-L-homocysteine. Its pathway is tRNA modification; N(7)-methylguanine-tRNA biosynthesis. Catalyzes the formation of N(7)-methylguanine at position 46 (m7G46) in tRNA. The polypeptide is tRNA (guanine-N(7)-)-methyltransferase (Synechococcus sp. (strain WH7803)).